Here is a 1806-residue protein sequence, read N- to C-terminus: MATRVEVGSITPLTAVPGLGEMGKEETLTRTYFLQAGEASGAPPARILEAKSPLRSPARLLPLPRLAPKPFSKEQDVKSPVPSLRPSSTGPSPSGGLSEEPAAKDLDNRMPGLVGQEVGSGEGPRTSSPLFNKAVFLRPSSSTMILFETTKSGPALGKAVSEGAEEAKLGVSGSRPEVAAKPALPTQKPAGTLPRSAPLSQDTKPPVPQEEAGQDHPPSKASSVEDTARPLVEPRPRLKRRPVSAIFTESIQPQKPGPGAAATVGKVPPTPPEKTWVRKPRPLSMDLTARFENKEALLRKVADEGSGPTAGDMAGLERPRAASKLDRDCLVKAEAPLHDPDLDFLEVAKKIRERKEKMLSKPEMGSPRALVGGSSGVTPSNDQSPWEEKAKLDPEPEKAAESPSPRLGRGLELAEVKSRVADGEAAAGGEWASRRSVRKCISLFREDSTLALAVGSESPLATPASPSAAPEPEKGVVSVQERIRGWTAESSEAKPEVRRRTFQARPLSADLTKLFSSSASSNEVKYEKSAELSGEFPKEPREKQKEGHSLDGACIPRSPWKPGTLRDKSRQTEQKVSSNQDPDSCRGGSSVEAPCPSDVTPEDDRSFQTVWATVFEHHVERHTVADQSGRCLSTTPPGDMAHARVSEPRPRPEMGSWLGRDPPDMTKLKKENSRGFDNPETEKLGPTTLLNGELRPYHTPLRDKYPLSENHNNNTFLKHLENPPTSQRIEPRYDIVHAVGERVHSEAISPAPEEKAVTLRSLRSWLSLKDRQLSQEVTPADLECGLEGQAGSVQRASLIWEARGMPEASGPKFGGNCPFPKWTGGAVVSSHKATVAVSEEHCAPGATSVRAIKAAIWESQHEGPEGARSKPGVGARGPPQGCPLDPLSRATNGPSDSQARTHPDAFAVQKGPFIVAAREGDPGPAQVPQPAVRMRKAGAMDQRMDRWRRRTLPPNVKFDTFSSLVPEDSPHVGHRRTDYVSPTASALRKPQLSHYRVETQEVNPGASRDQTSPAVKQGSPVEPKATFFAVTYQIPNTQKAKGVVLSGAESLLEHSRKITPPSSPHSLTSTLVSLGHEEALEMAGSKNWMKGREHENASILKTLKPTDRPSSLGAWSLDPFNGRIIDVDALWSHRGSEDGPRPQSNWKESANKMSPSGGAPQTTPTLRSRPKDLPVRRKTDVISDTFPGKIRDGYRSSVLDIDALMAEYQELSLKVPGEAQERRSPTVEPSTLPRERPVQLGGVEQRRRSLKEMPDTGGLWKPASSAEINHSFTPGLGKQLAETLETAMGTKSSPPFWALPPSAPSERYPGGSPIPADPRKKTGFAEDDRKAFASKHHVAKCQNYLAESKPSGREDPGSGVRVSPKSPPTDQKKGTPRKSTGRGEEDSVAQWGDHPRDCGRVPLDIKRAYSEKGPPANIREGLSIMHEARERRREQPKGRPSLTGENLEAKMGPCWWESGTGDSHKVLPRDLEKEDAPQEKERPLQQVSPVASVPWRSHSFCKDRRSGPFVDQLKQCFSRQPTEPKDTDTLVHEAGSQYGTWTEQCQSGESLATESPDSSATSTRKQPPSSRLSSLSSQTEPTSAGDQYDCSRDQRSTSVDHSSTDLESTDGMEGPPPPDACPEKRVDDFSFIDQTSVLDSSALKTRVQLSKRSRRRAPISHSLRRSRFSESESRSPLEDETDNTWMFKDSTEEKSPRKEESDEEETASKAERTPVSHPQRMPAFPGMDPAVLKAQLHKRPEVDSPGETPSWAPQPKSPKSPFQPGVLGSRVLPSSMDKDERSDEPSPQWLKELKSKKRQSLYENQV.

Disordered regions lie at residues 38-131 (EASG…SPLF) and 158-282 (KAVS…KPRP). Positions 51–70 (KSPLRSPARLLPLPRLAPKP) are enriched in low complexity. A phosphoserine mark is found at Ser-52, Ser-56, Ser-79, Ser-87, Ser-88, Ser-92, and Ser-128. Residues 82–100 (PSLRPSSTGPSPSGGLSEE) are compositionally biased toward low complexity. A compositionally biased stretch (basic and acidic residues) spans 226 to 236 (DTARPLVEPRP). A phosphoserine mark is found at Ser-244 and Ser-284. Disordered regions lie at residues 299–320 (RKVA…ERPR), 355–431 (KEKM…GGEW), 456–604 (SESP…PEDD), and 627–696 (QSGR…ELRP). Ser-366 bears the Phosphoserine mark. Thr-378 carries the phosphothreonine modification. The residue at position 384 (Ser-384) is a Phosphoserine. The span at 386-400 (WEEKAKLDPEPEKAA) shows a compositional bias: basic and acidic residues. Residue Ser-404 is modified to Phosphoserine. Residues 412–422 (ELAEVKSRVAD) show a composition bias toward basic and acidic residues. A compositionally biased stretch (low complexity) spans 456–470 (SESPLATPASPSAAP). Phosphoserine occurs at positions 458 and 508. The span at 514-523 (LFSSSASSNE) shows a compositional bias: polar residues. Basic and acidic residues-rich tracts occupy residues 524-549 (VKYE…EGHS) and 564-573 (TLRDKSRQTE). The residue at position 600 (Thr-600) is a Phosphothreonine. Composition is skewed to basic and acidic residues over residues 641–652 (AHARVSEPRPRP) and 661–674 (DPPD…ENSR). Phosphoserine is present on Ser-749. 3 disordered regions span residues 860 to 901 (QHEG…QART), 969 to 989 (SPHV…ALRK), and 1000 to 1019 (QEVN…KQGS). The span at 889 to 900 (RATNGPSDSQAR) shows a compositional bias: polar residues. 2 positions are modified to phosphoserine: Ser-969 and Ser-981. Positions 969-978 (SPHVGHRRTD) are enriched in basic and acidic residues. A Phosphothreonine modification is found at Thr-1059. Ser-1063 and Ser-1154 each carry phosphoserine. The segment at 1134–1178 (RGSEDGPRPQSNWKESANKMSPSGGAPQTTPTLRSRPKDLPVRRK) is disordered. A compositionally biased stretch (polar residues) spans 1142–1166 (PQSNWKESANKMSPSGGAPQTTPTL). Thr-1163 is subject to Phosphothreonine. Residues 1169-1178 (RPKDLPVRRK) are compositionally biased toward basic and acidic residues. 2 positions are modified to phosphothreonine: Thr-1179 and Thr-1185. 2 disordered regions span residues 1216–1265 (PGEA…PASS) and 1291–1493 (KSSP…VASV). Ser-1224 carries the post-translational modification Phosphoserine. The residue at position 1226 (Thr-1226) is a Phosphothreonine. 2 stretches are compositionally biased toward basic and acidic residues: residues 1244–1254 (EQRRRSLKEMP) and 1317–1331 (DPRK…DRKA). Ser-1366 is modified (phosphoserine). 2 stretches are compositionally biased toward basic and acidic residues: residues 1393 to 1410 (DHPR…RAYS) and 1426 to 1437 (HEARERRREQPK). A Phosphoserine modification is found at Ser-1441. Residues 1462-1483 (DSHKVLPRDLEKEDAPQEKERP) are compositionally biased toward basic and acidic residues. Phosphoserine occurs at positions 1488 and 1506. Disordered stretches follow at residues 1512–1627 (QLKQ…KRVD) and 1642–1806 (ALKT…ENQV). Residues 1522 to 1531 (TEPKDTDTLV) show a composition bias toward basic and acidic residues. Over residues 1537-1568 (QYGTWTEQCQSGESLATESPDSSATSTRKQPP) the composition is skewed to polar residues. 2 positions are modified to phosphoserine: Ser-1555 and Ser-1662. Basic residues predominate over residues 1649–1666 (LSKRSRRRAPISHSLRRS). Composition is skewed to basic and acidic residues over residues 1667–1677 (RFSESESRSPL) and 1689–1714 (DSTE…ERTP). 4 positions are modified to phosphoserine: Ser-1701, Ser-1757, Ser-1760, and Ser-1786. The span at 1753–1764 (PQPKSPKSPFQP) shows a compositional bias: low complexity.

This is an uncharacterized protein from Homo sapiens (Human).